Reading from the N-terminus, the 85-residue chain is UPF0410 protein YdaS (85 aa).

A run of 3 helical transmembrane segments spans residues 2 to 22 (LSFL…SAIV), 28 to 48 (GGIF…HGLL), and 58 to 78 (FAIF…GLIF).

This sequence belongs to the UPF0410 family.

The protein resides in the cell membrane. The chain is UPF0410 protein YdaS (ydaS) from Bacillus subtilis (strain 168).